We begin with the raw amino-acid sequence, 552 residues long: N-acetylglucosamine-6-sulfatase (552 aa).

The N-terminal stretch at 1–36 is a signal peptide; sequence MRLLPLAPGRLRRGSPRHLPSCSPALLLLVLGGCLG. Ca(2+)-binding residues include Asp-55, Asp-56, and Cys-91. Cys-91 (nucleophile) is an active-site residue. Cys-91 carries the 3-oxoalanine (Cys) modification. 7 N-linked (GlcNAc...) asparagine glycosylation sites follow: Asn-111, Asn-117, Asn-183, Asn-198, Asn-210, Asn-279, and Asn-317. Positions 326 and 327 each coordinate Ca(2+). Asn-362, Asn-387, Asn-405, Asn-422, Asn-449, and Asn-480 each carry an N-linked (GlcNAc...) asparagine glycan. Ser-541 is modified (phosphoserine).

The protein belongs to the sulfatase family. Ca(2+) serves as cofactor. Post-translationally, the form A (78 kDa) is processed by internal peptidase cleavage to a 32 kDa N-terminal species (form B) and a 48 kDa C-terminal species. In terms of processing, the conversion to 3-oxoalanine (also known as C-formylglycine, FGly), of a serine or cysteine residue in prokaryotes and of a cysteine residue in eukaryotes, is critical for catalytic activity.

The protein resides in the lysosome. It carries out the reaction Hydrolysis of the 6-sulfate groups of the N-acetyl-D-glucosamine 6-sulfate units of heparan sulfate and keratan sulfate.. Hydrolyzes 6-sulfate groups in N-acetyl-d-glucosaminide units of heparin sulfate and keratan sulfate. The protein is N-acetylglucosamine-6-sulfatase (GNS) of Homo sapiens (Human).